The following is a 925-amino-acid chain: TBC1 domain family member 2A (925 aa).

At M1 the chain carries N-acetylmethionine. The segment at M1–R41 is disordered. An interaction with CADH1 region spans residues M1–E171. A PH domain is found at P47–W144. Residues N231–L278 form a disordered region. Residues S297–P435 form an interaction with RAC1 region. Positions R302–K475 form a coiled coil. A Rab-GAP TBC domain is found at G622–G814. A coiled-coil region spans residues M872–Q907. Positions R904–P925 are disordered. Acidic residues predominate over residues P916 to P925. Position 917 is a phosphoserine (S917).

Interacts with activated RAC1 and CDH1.

Its subcellular location is the cytoplasm. It localises to the cytoplasmic vesicle. It is found in the cell junction. May act as a GTPase-activating protein for Rab family protein(s). Signal effector acting as a linker between RAC1 and RAB7A, leading to RAB7A inactivation and further inhibition of cadherin degradation. This Bos taurus (Bovine) protein is TBC1 domain family member 2A (TBC1D2).